A 235-amino-acid chain; its full sequence is Small ribosomal subunit protein uS5 (235 aa).

The S5 DRBM domain maps to 60–123; the sequence is ENQEVLDIAL…NYAKMNIIEI (64 aa). Residues C127, C132, C134, and H138 each coordinate Zn(2+).

Belongs to the universal ribosomal protein uS5 family. As to quaternary structure, part of the 30S ribosomal subunit. Contacts protein S4. It depends on Zn(2+) as a cofactor.

In terms of biological role, with S4 and S12 plays an important role in translational accuracy. The chain is Small ribosomal subunit protein uS5 from Thermococcus kodakarensis (strain ATCC BAA-918 / JCM 12380 / KOD1) (Pyrococcus kodakaraensis (strain KOD1)).